Here is a 336-residue protein sequence, read N- to C-terminus: MYYPFVRKALFQLDPERAHEFTFQQMRRITGTPLEALLRQKVPSKPVSCMGLTFKNPLGLAAGLDKNGECIDALGALGFGSVEIGTVTPRPQPGNDKPRLFRLVEAEGLINRMGFNNLGVDNLVENVKKAHFDGVLGINIGKNKDTPVEQGKDDYLICMEKVFPYAGYIAINISSPNTPGLRSLQYGDALDDLLAAIKNQQQVLSQKHHKYVPVAVKIAPDLSLEELIQVADSLVRHNIDGVIATNTTLDRSLVQGMKYCDETGGLSGRPLQLKSTEIIRLLSQELQGRLPIIGVGGIDSVIAAREKIAAGASLIQIYSGFIFKGPPLVKEIVTHL.

Residues 62 to 66 (AGLDK) and Thr-86 each bind FMN. Lys-66 contacts substrate. Position 111–115 (111–115 (NRMGF)) interacts with substrate. Positions 139 and 172 each coordinate FMN. Asn-172 contacts substrate. Ser-175 functions as the Nucleophile in the catalytic mechanism. Asn-177 serves as a coordination point for substrate. FMN is bound by residues Lys-217 and Thr-245. 246–247 (NT) contacts substrate. Residues Gly-268, Gly-297, and 318–319 (YS) contribute to the FMN site.

Belongs to the dihydroorotate dehydrogenase family. Type 2 subfamily. Monomer. Requires FMN as cofactor.

It is found in the cell membrane. The enzyme catalyses (S)-dihydroorotate + a quinone = orotate + a quinol. It participates in pyrimidine metabolism; UMP biosynthesis via de novo pathway; orotate from (S)-dihydroorotate (quinone route): step 1/1. Its function is as follows. Catalyzes the conversion of dihydroorotate to orotate with quinone as electron acceptor. The sequence is that of Dihydroorotate dehydrogenase (quinone) from Cronobacter sakazakii (strain ATCC BAA-894) (Enterobacter sakazakii).